A 466-amino-acid polypeptide reads, in one-letter code: MGGMTVLKLYNTLTREKTDFRPIDPKNVRMYVCGPTVYDFAHIGNARPIIVFDVLFRLLRHVYGTDHVTYARNITDVDDKINARALRDYPGLPLNEAIRHVTERTETRFLEDAALLGCLDPTVQPRATENIPGMIEIIETLIAKGHAYEAEGEVLFDTRSMAEYGQLSKRNLDEQQAGARVAVEAHKRNPGDFVLWKLSAGHEPGWESPWGRGRPGWHIECSAMSGRYLGEVFDIHGGGIDLIFPHHENEIAQSRCAHGTAVMANVWMHNGFLQVEGRKMSKSEGNFITIYDLLHTEKFGGRKWPGEVLRLAMLMTHYREPIDFSIKRLEEAEHLLSKWPVHGSASGEADPAVVAALTDDLNTVAAIQALHALAQKATADARHLGAFAASAALLGVEPKEIELDEAVVQEIDGRVRERLELLKSKNYAEADGIRADLLARGIQLKDGKDPETGERVTTWEVKRSQV.

Cysteine 33 is a Zn(2+) binding site. Residues proline 35–asparagine 45 carry the 'HIGH' region motif. The Zn(2+) site is built by cysteine 221, histidine 246, and glutamate 250. The 'KMSKS' region motif lies at lysine 279–serine 283. Lysine 282 is a binding site for ATP.

The protein belongs to the class-I aminoacyl-tRNA synthetase family. In terms of assembly, monomer. It depends on Zn(2+) as a cofactor.

It is found in the cytoplasm. It carries out the reaction tRNA(Cys) + L-cysteine + ATP = L-cysteinyl-tRNA(Cys) + AMP + diphosphate. The sequence is that of Cysteine--tRNA ligase from Sinorhizobium medicae (strain WSM419) (Ensifer medicae).